The chain runs to 328 residues: Malate dehydrogenase (328 aa).

11 to 17 (GAAGQIG) contacts NAD(+). Positions 94 and 100 each coordinate substrate. Residues Asn-107, Gln-114, and 131-133 (VGN) contribute to the NAD(+) site. Substrate contacts are provided by Asn-133 and Arg-164. His-189 functions as the Proton acceptor in the catalytic mechanism.

The protein belongs to the LDH/MDH superfamily. MDH type 2 family.

The enzyme catalyses (S)-malate + NAD(+) = oxaloacetate + NADH + H(+). In terms of biological role, catalyzes the reversible oxidation of malate to oxaloacetate. The sequence is that of Malate dehydrogenase from Xylella fastidiosa (strain Temecula1 / ATCC 700964).